A 156-amino-acid polypeptide reads, in one-letter code: Small ribosomal subunit protein uS7 (156 aa).

This sequence belongs to the universal ribosomal protein uS7 family. As to quaternary structure, part of the 30S ribosomal subunit. Contacts proteins S9 and S11.

One of the primary rRNA binding proteins, it binds directly to 16S rRNA where it nucleates assembly of the head domain of the 30S subunit. Is located at the subunit interface close to the decoding center, probably blocks exit of the E-site tRNA. This is Small ribosomal subunit protein uS7 from Dechloromonas aromatica (strain RCB).